The following is a 338-amino-acid chain: Ketol-acid reductoisomerase (NADP(+)) (338 aa).

In terms of domain architecture, KARI N-terminal Rossmann spans methionine 1 to threonine 181. NADP(+)-binding positions include tyrosine 24 to glutamine 27, arginine 47, and serine 52. Histidine 107 is a catalytic residue. Glycine 133 provides a ligand contact to NADP(+). The KARI C-terminal knotted domain maps to asparagine 182 to isoleucine 327. The Mg(2+) site is built by aspartate 190, glutamate 194, glutamate 226, and glutamate 230. Serine 251 serves as a coordination point for substrate.

The protein belongs to the ketol-acid reductoisomerase family. Requires Mg(2+) as cofactor.

The catalysed reaction is (2R)-2,3-dihydroxy-3-methylbutanoate + NADP(+) = (2S)-2-acetolactate + NADPH + H(+). It carries out the reaction (2R,3R)-2,3-dihydroxy-3-methylpentanoate + NADP(+) = (S)-2-ethyl-2-hydroxy-3-oxobutanoate + NADPH + H(+). It functions in the pathway amino-acid biosynthesis; L-isoleucine biosynthesis; L-isoleucine from 2-oxobutanoate: step 2/4. The protein operates within amino-acid biosynthesis; L-valine biosynthesis; L-valine from pyruvate: step 2/4. In terms of biological role, involved in the biosynthesis of branched-chain amino acids (BCAA). Catalyzes an alkyl-migration followed by a ketol-acid reduction of (S)-2-acetolactate (S2AL) to yield (R)-2,3-dihydroxy-isovalerate. In the isomerase reaction, S2AL is rearranged via a Mg-dependent methyl migration to produce 3-hydroxy-3-methyl-2-ketobutyrate (HMKB). In the reductase reaction, this 2-ketoacid undergoes a metal-dependent reduction by NADPH to yield (R)-2,3-dihydroxy-isovalerate. This chain is Ketol-acid reductoisomerase (NADP(+)), found in Cupriavidus necator (strain ATCC 17699 / DSM 428 / KCTC 22496 / NCIMB 10442 / H16 / Stanier 337) (Ralstonia eutropha).